The chain runs to 248 residues: Triosephosphate isomerase (248 aa).

Asparagine 9–lysine 11 contacts substrate. Histidine 94 acts as the Electrophile in catalysis. Glutamate 166 functions as the Proton acceptor in the catalytic mechanism. Substrate contacts are provided by residues glycine 172, serine 212, and glycine 233–glycine 234.

The protein belongs to the triosephosphate isomerase family. Homodimer.

It is found in the cytoplasm. It catalyses the reaction D-glyceraldehyde 3-phosphate = dihydroxyacetone phosphate. The protein operates within carbohydrate biosynthesis; gluconeogenesis. It functions in the pathway carbohydrate degradation; glycolysis; D-glyceraldehyde 3-phosphate from glycerone phosphate: step 1/1. Its function is as follows. Involved in the gluconeogenesis. Catalyzes stereospecifically the conversion of dihydroxyacetone phosphate (DHAP) to D-glyceraldehyde-3-phosphate (G3P). This is Triosephosphate isomerase from Clostridium beijerinckii (strain ATCC 51743 / NCIMB 8052) (Clostridium acetobutylicum).